A 54-amino-acid chain; its full sequence is Light-harvesting protein B-880 beta chain (54 aa).

Residues 1-20 (AEDRSSLSGVSDAEAKEFHA) are Cytoplasmic-facing. The a bacteriochlorophyll site is built by His-19 and His-37. Residues 21–43 (LFVSSFTAFIVIAVLAHVLAWAW) traverse the membrane as a helical segment. Residues 44–54 (RPWIPGPKGWA) are Periplasmic-facing.

The protein belongs to the antenna complex beta subunit family. As to quaternary structure, the core complex is formed by different alpha and beta chains, binding bacteriochlorophyll molecules, and arranged most probably in tetrameric structures disposed around the reaction center. The non-pigmented gamma chains may constitute additional components.

It localises to the cell inner membrane. Functionally, antenna complexes are light-harvesting systems, which transfer the excitation energy to the reaction centers. The protein is Light-harvesting protein B-880 beta chain of Rhodoblastus acidophilus (Rhodopseudomonas acidophila).